Reading from the N-terminus, the 560-residue chain is Leiomodin-3 (560 aa).

Residues 1-49 (MSEHSRNSDQEELLDEEINEDEILANLSAEELKELQSEMEVMAPDPSLP) form an interaction with tropomyosin alpha region. Residues 16-42 (EEINEDEILANLSAEELKELQSEMEVM) adopt a coiled-coil conformation. Disordered stretches follow at residues 45–68 (DPSL…NFNH) and 127–217 (IVAN…SKLD). Acidic residues predominate over residues 142–167 (ETDEEDEEEEDDDDDDEGEDDGEESE). The span at 168 to 182 (ETNREEEGKAKEQIR) shows a compositional bias: basic and acidic residues. The segment covering 183–192 (NCENNCQQVT) has biased composition (polar residues). Residues 194-217 (KAFKEQRDRPEAQEQSEKKISKLD) are compositionally biased toward basic and acidic residues. Residues 386–425 (VTNLLTRNQDKQRQKRQEEQKQQQLKEQKKLIAMLENGLG) are a coiled coil. 2 disordered regions span residues 437–480 (PKPD…KYRT) and 494–530 (QRKS…PPLV). Residues 448 to 458 (QPPPPRPPNPQ) are compositionally biased toward pro residues. A compositionally biased stretch (basic and acidic residues) spans 498-516 (RMPEAREPPEKTNLKDVIK). Residues 534-553 (PRDQLLNDIRHSSVAYLKPV) enclose the WH2 domain.

It belongs to the tropomodulin family. As to quaternary structure, may interact with tropomyosin alpha (TPM1/2) N-terminus. Interacts with KLHL40; leading to stabilization. Post-translationally, ubiquitinated, leading to its degradation. Interaction with KLHL40 negatively regulates ubiquitination and degradation. As to expression, expressed in cardiac and at higher levels in skeletal muscles (at protein level).

It localises to the cytoplasm. The protein localises to the myofibril. The protein resides in the sarcomere. It is found in the m line. Its subcellular location is the a band. It localises to the cytoskeleton. Essential for the organization of sarcomeric actin thin filaments in skeletal muscle. Increases the rate of actin polymerization. The chain is Leiomodin-3 (LMOD3) from Homo sapiens (Human).